The sequence spans 925 residues: Bifunctional glutamine synthetase adenylyltransferase/adenylyl-removing enzyme (925 aa).

The tract at residues 1-426 is adenylyl removase; that stretch reads MTDASDLLSL…AQFDQVFADK (426 aa). An adenylyl transferase region spans residues 436–925; the sequence is DQAAGCIWSG…AALWARVFGA (490 aa).

The protein belongs to the GlnE family. It depends on Mg(2+) as a cofactor.

It carries out the reaction [glutamine synthetase]-O(4)-(5'-adenylyl)-L-tyrosine + phosphate = [glutamine synthetase]-L-tyrosine + ADP. The enzyme catalyses [glutamine synthetase]-L-tyrosine + ATP = [glutamine synthetase]-O(4)-(5'-adenylyl)-L-tyrosine + diphosphate. Involved in the regulation of glutamine synthetase GlnA, a key enzyme in the process to assimilate ammonia. When cellular nitrogen levels are high, the C-terminal adenylyl transferase (AT) inactivates GlnA by covalent transfer of an adenylyl group from ATP to specific tyrosine residue of GlnA, thus reducing its activity. Conversely, when nitrogen levels are low, the N-terminal adenylyl removase (AR) activates GlnA by removing the adenylyl group by phosphorolysis, increasing its activity. The regulatory region of GlnE binds the signal transduction protein PII (GlnB) which indicates the nitrogen status of the cell. The polypeptide is Bifunctional glutamine synthetase adenylyltransferase/adenylyl-removing enzyme (Burkholderia mallei (strain ATCC 23344)).